Consider the following 326-residue polypeptide: Vitamin B12 import system permease protein BtuC (326 aa).

Transmembrane regions (helical) follow at residues 13-35, 55-77, 90-107, 111-133, 146-168, 188-205, 242-264, 274-296, and 303-322; these read IRWLLCLSVLMLLALLLSLCAGE, IRLPRTLAVLLVGAALAISGAVM, LLGVSNGAGVGLIAAVLL, QLPNWALGLCAIAGALIITLILL, LLAGVALGIICSALMTWAIYFST, WRQSWLMLALIPVLLWIC, MVGVSVALAGAIGFIGLVIPHIL, VLLPGCALAGASALLLADIVARL, and LPIGVVTATLGAPVFIWLLL.

The protein belongs to the binding-protein-dependent transport system permease family. FecCD subfamily. As to quaternary structure, the complex is composed of two ATP-binding proteins (BtuD), two transmembrane proteins (BtuC) and a solute-binding protein (BtuF).

Its subcellular location is the cell inner membrane. In terms of biological role, part of the ABC transporter complex BtuCDF involved in vitamin B12 import. Involved in the translocation of the substrate across the membrane. The polypeptide is Vitamin B12 import system permease protein BtuC (Shigella flexneri).